The sequence spans 206 residues: MARYLGPKLKLSRREGTDLFLKSGVRAIDTKCKIEQAPGQHGARKPRLSDYGVQLREKQKVRRIYGVLERQFRNYYKEAARLKGNTGENLLALLEGRLDNVVYRMGFGATRAEARQLVSHKAIMVPGRVVNIASYQVSPNDVVSIREKAKKQSRVKAALELAEQREKPTWLEVDAGKMEGTFKRKPERSDLSADINEHLIVELYSK.

The S4 RNA-binding domain occupies 96–156 (GRLDNVVYRM…EKAKKQSRVK (61 aa)).

Belongs to the universal ribosomal protein uS4 family. In terms of assembly, part of the 30S ribosomal subunit. Contacts protein S5. The interaction surface between S4 and S5 is involved in control of translational fidelity.

One of the primary rRNA binding proteins, it binds directly to 16S rRNA where it nucleates assembly of the body of the 30S subunit. In terms of biological role, with S5 and S12 plays an important role in translational accuracy. The protein is Small ribosomal subunit protein uS4 of Shigella flexneri.